A 956-amino-acid polypeptide reads, in one-letter code: Kinesin heavy chain isoform 5C (956 aa).

The 320-residue stretch at 8-327 (SIKVMCRFRP…LMFGQRAKTI (320 aa)) folds into the Kinesin motor domain. ATP contacts are provided by Q87, S89, S90, G91, K92, T93, H94, and K99. A microtubule-binding region spans residues 174-315 (VSSPEEVMDV…PSVFNEAETK (142 aa)). T403 bears the Phosphothreonine mark. Residues 406-923 (VDGISAEKEK…RRAHSAQIAK (518 aa)) adopt a coiled-coil conformation. Residues 859–956 (CELPKLEKRL…GSSNSTHYQK (98 aa)) form a globular region. The interval 910–956 (KNMARRAHSAQIAKPIRPGHYPASSPTAVHAVRGGGGGSSNSTHYQK) is disordered.

The protein belongs to the TRAFAC class myosin-kinesin ATPase superfamily. Kinesin family. Kinesin subfamily. In terms of assembly, oligomer composed of two heavy chains and two light chains. Interacts with GRIP1. Interacts with KLC3 and TRAK1. Interacts with ZFYVE27.

It is found in the cytoplasm. The protein localises to the cytoskeleton. The protein resides in the cell projection. Its subcellular location is the dendrite. It catalyses the reaction ATP + H2O = ADP + phosphate + H(+). Its function is as follows. Microtubule-associated force-producing protein that may play a role in organelle transport. Has ATPase activity. Involved in synaptic transmission. Mediates dendritic trafficking of mRNAs. Required for anterograde axonal transportation of MAPK8IP3/JIP3 which is essential for MAPK8IP3/JIP3 function in axon elongation. The chain is Kinesin heavy chain isoform 5C (Kif5c) from Mus musculus (Mouse).